The following is a 21-amino-acid chain: Apolipophorin 2 (21 aa).

In terms of tissue distribution, expressed in hemolymph.

It localises to the secreted. Its function is as follows. Constitutes the major component of lipophorin, which mediates transport for various types of lipids in hemolymph. Acts by forming lipoprotein particles that bind lipoproteins and lipids. The polypeptide is Apolipophorin 2 (Galleria mellonella (Greater wax moth)).